The following is a 926-amino-acid chain: Alpha-aminoadipic semialdehyde synthase, mitochondrial (926 aa).

A mitochondrion-targeting transit peptide spans 1–27; sequence MLRAQRLRLARLRACVSRGLHHKPVMA. Residues 28-455 form a lysine-ketoglutarate reductase region; that stretch reads LRREDVNAWE…DAVITSNGLL (428 aa). Residues K48, K52, and K56 each carry the N6-acetyllysine modification. K93 is subject to N6-acetyllysine; alternate. An N6-succinyllysine; alternate modification is found at K93. An N6-acetyllysine modification is found at K128. The residue at position 138 (K138) is an N6-acetyllysine; alternate. N6-succinyllysine; alternate is present on K138. K274 is modified (N6-succinyllysine). Position 286 is an N6-acetyllysine; alternate (K286). K286 is modified (N6-succinyllysine; alternate). At K333 the chain carries N6-succinyllysine. K458 is subject to N6-acetyllysine; alternate. An N6-succinyllysine; alternate modification is found at K458. Residues 477–926 are saccharopine dehydrogenase; sequence MSTKKKVLVL…VFNTQSTIKL (450 aa). Residues S488, D512, and Q516 each coordinate NAD(+). K523 and K535 each carry N6-acetyllysine; alternate. 2 positions are modified to N6-succinyllysine; alternate: K523 and K535. Positions 554, 576, and 577 each coordinate NAD(+). Residue 577 to 578 coordinates L-saccharopine; that stretch reads SY. K584 bears the N6-acetyllysine; alternate mark. Residue K584 is modified to N6-succinyllysine; alternate. NAD(+) is bound by residues L603, D604, and P605. D604 serves as a coordination point for L-saccharopine. Position 703 (R703) interacts with L-saccharopine. Residue K707 is modified to N6-acetyllysine. 724–726 lines the L-saccharopine pocket; it reads TLR. Residue K732 is modified to N6-succinyllysine. The residue at position 739 (K739) is an N6-acetyllysine. K761 bears the N6-acetyllysine; alternate mark. Residue K761 is modified to N6-succinyllysine; alternate. 2 positions are modified to N6-acetyllysine: K778 and K780.

In the N-terminal section; belongs to the AlaDH/PNT family. It in the C-terminal section; belongs to the saccharopine dehydrogenase family. In terms of assembly, homotetramer.

The protein resides in the mitochondrion. It catalyses the reaction L-saccharopine + NADP(+) + H2O = L-lysine + 2-oxoglutarate + NADPH + H(+). The catalysed reaction is L-saccharopine + NAD(+) + H2O = (S)-2-amino-6-oxohexanoate + L-glutamate + NADH + H(+). Its pathway is amino-acid degradation; L-lysine degradation via saccharopine pathway; glutaryl-CoA from L-lysine: step 1/6. It functions in the pathway amino-acid degradation; L-lysine degradation via saccharopine pathway; glutaryl-CoA from L-lysine: step 2/6. Its function is as follows. Bifunctional enzyme that catalyzes the first two steps in lysine degradation. This is Alpha-aminoadipic semialdehyde synthase, mitochondrial from Rattus norvegicus (Rat).